The sequence spans 373 residues: GTPase Obg (373 aa).

Residues 1–158 (MFVDSVELLI…KQVRLEMKLI (158 aa)) form the Obg domain. The tract at residues 62–83 (NHIKAENGRPGEGRKKYGRKGQ) is disordered. The segment covering 64-76 (IKAENGRPGEGRK) has biased composition (basic and acidic residues). Residues 159–362 (ADVGLVGYPN…LRYALGDFVK (204 aa)) form the OBG-type G domain. GTP is bound by residues 165–172 (GYPNVGKS), 190–194 (FTTLT), 212–215 (DIPG), 280–283 (TKID), and 343–345 (SSV). Mg(2+) contacts are provided by S172 and T192.

It belongs to the TRAFAC class OBG-HflX-like GTPase superfamily. OBG GTPase family. As to quaternary structure, monomer. It depends on Mg(2+) as a cofactor.

Its subcellular location is the cytoplasm. In terms of biological role, an essential GTPase which binds GTP, GDP and possibly (p)ppGpp with moderate affinity, with high nucleotide exchange rates and a fairly low GTP hydrolysis rate. Plays a role in control of the cell cycle, stress response, ribosome biogenesis and in those bacteria that undergo differentiation, in morphogenesis control. The protein is GTPase Obg of Sulfurovum sp. (strain NBC37-1).